The primary structure comprises 1145 residues: Trafficking protein particle complex subunit 10 (1145 aa).

It belongs to the TMEM1 family. As to quaternary structure, part of the multisubunit TRAPP (transport protein particle) complex. Interacts with Shal (via C-terminal dendritic targeting motif). Co-expressed with Shal in the nervous system.

It localises to the golgi apparatus. The protein resides in the cis-Golgi network. It is found in the cell projection. Its subcellular location is the dendrite. The protein localises to the perikaryon. In terms of biological role, may play a role in vesicular transport from endoplasmic reticulum to Golgi. Has a role in one of the several mechanisms underlying dendritic localization of Shal channels. The sequence is that of Trafficking protein particle complex subunit 10 (SIDL) from Drosophila melanogaster (Fruit fly).